The primary structure comprises 431 residues: Enolase (431 aa).

Residue Gln162 coordinates (2R)-2-phosphoglycerate. Glu204 functions as the Proton donor in the catalytic mechanism. 3 residues coordinate Mg(2+): Asp241, Glu288, and Asp315. (2R)-2-phosphoglycerate contacts are provided by Lys340, Arg369, Ser370, and Lys391. Catalysis depends on Lys340, which acts as the Proton acceptor.

This sequence belongs to the enolase family. Requires Mg(2+) as cofactor.

It is found in the cytoplasm. Its subcellular location is the secreted. It localises to the cell surface. It carries out the reaction (2R)-2-phosphoglycerate = phosphoenolpyruvate + H2O. It participates in carbohydrate degradation; glycolysis; pyruvate from D-glyceraldehyde 3-phosphate: step 4/5. Catalyzes the reversible conversion of 2-phosphoglycerate (2-PG) into phosphoenolpyruvate (PEP). It is essential for the degradation of carbohydrates via glycolysis. The polypeptide is Enolase (Phocaeicola vulgatus (strain ATCC 8482 / DSM 1447 / JCM 5826 / CCUG 4940 / NBRC 14291 / NCTC 11154) (Bacteroides vulgatus)).